Here is a 286-residue protein sequence, read N- to C-terminus: Bifunctional protein FolD (286 aa).

Residues 165–167 and Ser190 contribute to the NADP(+) site; that span reads GRS.

Belongs to the tetrahydrofolate dehydrogenase/cyclohydrolase family. Homodimer.

It catalyses the reaction (6R)-5,10-methylene-5,6,7,8-tetrahydrofolate + NADP(+) = (6R)-5,10-methenyltetrahydrofolate + NADPH. It carries out the reaction (6R)-5,10-methenyltetrahydrofolate + H2O = (6R)-10-formyltetrahydrofolate + H(+). The protein operates within one-carbon metabolism; tetrahydrofolate interconversion. Functionally, catalyzes the oxidation of 5,10-methylenetetrahydrofolate to 5,10-methenyltetrahydrofolate and then the hydrolysis of 5,10-methenyltetrahydrofolate to 10-formyltetrahydrofolate. This chain is Bifunctional protein FolD, found in Staphylococcus aureus (strain MRSA252).